Reading from the N-terminus, the 222-residue chain is UPF0758 protein YicR (222 aa).

The MPN domain occupies 100-222 (PLLSPEMTRE…YVSFAERGWI (123 aa)). His-171, His-173, and Asp-184 together coordinate Zn(2+). The JAMM motif motif lies at 171–184 (HNHPSGCAEPSKAD).

It belongs to the UPF0758 family. YicR subfamily.

The polypeptide is UPF0758 protein YicR (Escherichia coli O81 (strain ED1a)).